We begin with the raw amino-acid sequence, 195 residues long: ATP-dependent Clp protease proteolytic subunit 2 (195 aa).

Catalysis depends on Ser92, which acts as the Nucleophile. The active site involves His117.

The protein belongs to the peptidase S14 family. In terms of assembly, fourteen ClpP subunits assemble into 2 heptameric rings which stack back to back to give a disk-like structure with a central cavity, resembling the structure of eukaryotic proteasomes.

Its subcellular location is the cytoplasm. The enzyme catalyses Hydrolysis of proteins to small peptides in the presence of ATP and magnesium. alpha-casein is the usual test substrate. In the absence of ATP, only oligopeptides shorter than five residues are hydrolyzed (such as succinyl-Leu-Tyr-|-NHMec, and Leu-Tyr-Leu-|-Tyr-Trp, in which cleavage of the -Tyr-|-Leu- and -Tyr-|-Trp bonds also occurs).. Cleaves peptides in various proteins in a process that requires ATP hydrolysis. Has a chymotrypsin-like activity. Plays a major role in the degradation of misfolded proteins. The chain is ATP-dependent Clp protease proteolytic subunit 2 from Rhodococcus jostii (strain RHA1).